Consider the following 135-residue polypeptide: Small ribosomal subunit protein bS16 (135 aa).

Residues 105 to 120 (DEKKKPVLKPKTEKAA) are compositionally biased toward basic and acidic residues. The interval 105–135 (DEKKKPVLKPKTEKAAPEAAAPEAEATEEQA) is disordered.

This sequence belongs to the bacterial ribosomal protein bS16 family.

The polypeptide is Small ribosomal subunit protein bS16 (Clavibacter sepedonicus (Clavibacter michiganensis subsp. sepedonicus)).